The chain runs to 311 residues: Ribosomal RNA small subunit methyltransferase H (311 aa).

S-adenosyl-L-methionine contacts are provided by residues 32 to 34, Asp52, Phe79, Asp100, and Gln107; that span reads AGH. Positions 287–311 are disordered; that stretch reads TASQEELEENNRARSAKLRIAEKRK. A compositionally biased stretch (basic residues) spans 300–311; sequence RSAKLRIAEKRK.

This sequence belongs to the methyltransferase superfamily. RsmH family.

It localises to the cytoplasm. The enzyme catalyses cytidine(1402) in 16S rRNA + S-adenosyl-L-methionine = N(4)-methylcytidine(1402) in 16S rRNA + S-adenosyl-L-homocysteine + H(+). Functionally, specifically methylates the N4 position of cytidine in position 1402 (C1402) of 16S rRNA. The chain is Ribosomal RNA small subunit methyltransferase H from Bacillus subtilis (strain 168).